We begin with the raw amino-acid sequence, 571 residues long: Minichromosome maintenance protein 10 (571 aa).

Threonine 17 is modified (phosphothreonine). Phosphoserine is present on serine 18. The zinc finger-like stretch occupies residues 309–335; that stretch reads CPIVNKKTHKKCGSPINISLHKCCDYH. The short motif at 435–451 is the Bipartite nuclear localization signal element; the sequence is KKSTALSRELGKIMRRR. Sufficient for nuclear localization regions lie at residues 435 to 512 and 453 to 553; these read KKST…LLGK and SSGL…KHFG. Residues 451–471 are compositionally biased toward basic and acidic residues; the sequence is RESSGLEDKSVGERQKMKRTT. The interval 451–473 is disordered; the sequence is RESSGLEDKSVGERQKMKRTTES. Phosphoserine occurs at positions 453 and 454. The Bipartite nuclear localization signal signature appears at 512–527; sequence KKKTVINDLLHYKKEK. Residues 548–561 show a composition bias toward basic and acidic residues; that stretch reads WQKHFGSKETKETS. Residues 548 to 571 form a disordered region; it reads WQKHFGSKETKETSDGSASDLEII.

Belongs to the MCM10 family. As to quaternary structure, self-associates; assembles into large homomultimeric complexes of approximately 800 kDa. Associates with the MCM2-7 complex and the DNA polymerase alpha:primase complex. Interacts with ORC1, ORC2, MCM2, MCM3, CDC54/MCM4, MCM6, CDC47/MCM7, RFA2, CDC45, POL1, PRI2, POL12, SIR2 and SIR3. The diubiquitinated form interacts with POL30/PCNA C-terminus. In terms of processing, diubiquitinated in a cell cycle-regulated manner. Ubiquitination first appears in late G(1) and persists throughout S phase.

The protein localises to the nucleus. Functionally, required for DNA synthesis. Required for entry into or completion of S phase. Involved in DNA replication and seems to participate in the activation of the pre-replication complex (pre-RC) and in transcription elongation. May play a role as a key coordinator in assembling the replication fork. Proposed to function at replication origins following the binding of the MCM2-7 complex prior to the recruitment of CDC45. Probably is required to stimulate phosphorylation of the MCM2-7 complex by the CDC7-DBF4 kinase complex. May recruit the DNA polymerase alpha:primase complex to replication origins and is required to maintain it on chromatin independently of CDC45. May also play a role in transcriptional silencing. The sequence is that of Minichromosome maintenance protein 10 (MCM10) from Saccharomyces cerevisiae (strain ATCC 204508 / S288c) (Baker's yeast).